The primary structure comprises 160 residues: 2-C-methyl-D-erythritol 2,4-cyclodiphosphate synthase (160 aa).

A divalent metal cation-binding residues include Asp11 and His13. Residues 11 to 13 (DVH) and 37 to 38 (HS) contribute to the 4-CDP-2-C-methyl-D-erythritol 2-phosphate site. His45 is a binding site for a divalent metal cation. 4-CDP-2-C-methyl-D-erythritol 2-phosphate contacts are provided by residues 59-61 (DIG), 64-68 (FPDTD), 135-138 (TTTE), Phe142, and Arg145.

It belongs to the IspF family. In terms of assembly, homotrimer. A divalent metal cation is required as a cofactor.

It catalyses the reaction 4-CDP-2-C-methyl-D-erythritol 2-phosphate = 2-C-methyl-D-erythritol 2,4-cyclic diphosphate + CMP. It participates in isoprenoid biosynthesis; isopentenyl diphosphate biosynthesis via DXP pathway; isopentenyl diphosphate from 1-deoxy-D-xylulose 5-phosphate: step 4/6. Its function is as follows. Involved in the biosynthesis of isopentenyl diphosphate (IPP) and dimethylallyl diphosphate (DMAPP), two major building blocks of isoprenoid compounds. Catalyzes the conversion of 4-diphosphocytidyl-2-C-methyl-D-erythritol 2-phosphate (CDP-ME2P) to 2-C-methyl-D-erythritol 2,4-cyclodiphosphate (ME-CPP) with a corresponding release of cytidine 5-monophosphate (CMP). This Alcanivorax borkumensis (strain ATCC 700651 / DSM 11573 / NCIMB 13689 / SK2) protein is 2-C-methyl-D-erythritol 2,4-cyclodiphosphate synthase.